The sequence spans 114 residues: uncharacterized protein (114 aa).

3 helical membrane-spanning segments follow: residues 38-60 (PLWF…TAGI), 64-86 (YAAI…AHMF), and 91-113 (SVIM…MGSY).

The protein localises to the cell membrane. This is an uncharacterized protein from Bacillus subtilis (strain 168).